A 90-amino-acid polypeptide reads, in one-letter code: Acylphosphatase (90 aa).

One can recognise an Acylphosphatase-like domain in the interval 5–90; sequence CEKFVVSGIV…CREYQGFEIL (86 aa). Catalysis depends on residues R20 and N38.

The protein belongs to the acylphosphatase family.

The enzyme catalyses an acyl phosphate + H2O = a carboxylate + phosphate + H(+). The protein is Acylphosphatase (acyP) of Vibrio vulnificus (strain CMCP6).